The primary structure comprises 181 residues: Adenine phosphoribosyltransferase (181 aa).

The protein belongs to the purine/pyrimidine phosphoribosyltransferase family. In terms of assembly, homodimer.

The protein localises to the cytoplasm. The enzyme catalyses AMP + diphosphate = 5-phospho-alpha-D-ribose 1-diphosphate + adenine. It functions in the pathway purine metabolism; AMP biosynthesis via salvage pathway; AMP from adenine: step 1/1. Its function is as follows. Catalyzes a salvage reaction resulting in the formation of AMP, that is energically less costly than de novo synthesis. This Psychromonas ingrahamii (strain DSM 17664 / CCUG 51855 / 37) protein is Adenine phosphoribosyltransferase.